A 338-amino-acid polypeptide reads, in one-letter code: Solute carrier family 35 member G5 (338 aa).

The interval Met-1–Ala-21 is disordered. The next 9 membrane-spanning stretches (helical) occupy residues Thr-37–Leu-57, Leu-67–Leu-87, Cys-105–Val-125, Cys-160–Leu-180, Ala-190–Tyr-210, Thr-221–Leu-241, Leu-250–Val-270, Leu-281–Leu-301, and Val-305–Ala-325. An EamA 1 domain is found at Leu-49 to Gly-174. The EamA 2 domain maps to Tyr-272–Ala-325.

This sequence belongs to the SLC35G solute transporter family.

The protein resides in the membrane. In Pan troglodytes (Chimpanzee), this protein is Solute carrier family 35 member G5 (SLC35G5).